We begin with the raw amino-acid sequence, 290 residues long: Enoyl-CoA hydratase, mitochondrial (290 aa).

A mitochondrion-targeting transit peptide spans 1–27 (MAALRALLPRVRAPLRPWLFCPVQRSF). Substrate is bound by residues 98-101 (ADIK) and Gly-141. At Lys-101 the chain carries N6-acetyllysine; alternate. An N6-succinyllysine; alternate modification is found at Lys-101. Residue Lys-204 is modified to N6-succinyllysine. Residue Lys-211 is modified to N6-acetyllysine.

This sequence belongs to the enoyl-CoA hydratase/isomerase family. Homohexamer; dimer of trimers.

It is found in the mitochondrion matrix. It carries out the reaction a (3S)-3-hydroxyacyl-CoA = a (2E)-enoyl-CoA + H2O. The enzyme catalyses a (3E)-enoyl-CoA = a 4-saturated (2E)-enoyl-CoA. The catalysed reaction is (3E)-hexenoyl-CoA = (2E)-hexenoyl-CoA. It catalyses the reaction (3S)-3-hydroxybutanoyl-CoA = (2E)-butenoyl-CoA + H2O. It carries out the reaction 3-hydroxyisovaleryl-CoA = 3-methylbut-2-enoyl-CoA + H2O. The enzyme catalyses 3-hydroxypropanoyl-CoA = acryloyl-CoA + H2O. The catalysed reaction is 3-hydroxybutanoyl-CoA = (2E)-butenoyl-CoA + H2O. It catalyses the reaction 2-methylpropenoyl-CoA + H2O = (S)-3-hydroxyisobutanoyl-CoA. It carries out the reaction (3S)-hydroxyhexanoyl-CoA = (2E)-hexenoyl-CoA + H2O. The enzyme catalyses (3S)-hydroxydecanoyl-CoA = (2E)-decenoyl-CoA + H2O. It participates in lipid metabolism; fatty acid beta-oxidation. Its function is as follows. Converts unsaturated trans-2-enoyl-CoA species ((2E)-enoyl-CoA) to the corresponding 3(S)-3-hydroxyacyl-CoA species through addition of a water molecule to the double bond. Catalyzes the hydration of medium- and short-chained fatty enoyl-CoA thioesters from 4 carbons long (C4) up to C16. Has high substrate specificity for crotonyl-CoA ((2E)-butenoyl-CoA) and moderate specificity for acryloyl-CoA, 3-methylcrotonyl-CoA (3-methyl-(2E)-butenoyl-CoA) and methacrylyl-CoA ((2E)-2-methylpropenoyl-CoA). Can bind tiglyl-CoA (2-methylcrotonoyl-CoA), but hydrates only a small amount of this substrate. Plays a key role in the beta-oxidation spiral of short- and medium-chain fatty acid oxidation. At a lower rate than the hydratase reaction, catalyzes the isomerase reaction of trans-3-enoyl-CoA species (such as (3E)-hexenoyl-CoA) to trans-2-enoyl-CoA species (such as (2E)-hexenoyl-CoA), which are subsequently hydrated to 3(S)-3-hydroxyacyl-CoA species (such as (3S)-hydroxyhexanoyl-CoA). In Bos taurus (Bovine), this protein is Enoyl-CoA hydratase, mitochondrial (ECHS1).